Reading from the N-terminus, the 185-residue chain is Intraflagellar transport protein 22 homolog (185 aa).

GTP-binding positions include 10–17, 63–67, and 123–126; these read GPCESGKT, DCGGD, and HKPG.

It belongs to the small GTPase superfamily. Rab family. Component of the IFT complex B, at least composed of IFT20, IFT22, IFT25, IFT27, IFT46, IFT52, TRAF3IP1/IFT54, IFT57, IFT74, IFT80, IFT81, and IFT88. Interacts with IFT88. Interacts with CFAP61.

It localises to the cell projection. The protein resides in the cilium. Its function is as follows. Small GTPase-like component of the intraflagellar transport (IFT) complex B. This Bos taurus (Bovine) protein is Intraflagellar transport protein 22 homolog (IFT22).